We begin with the raw amino-acid sequence, 432 residues long: Protein trichome birefringence-like 23 (432 aa).

Residues 13–35 form a helical; Signal-anchor for type II membrane protein membrane-spanning segment; that stretch reads QNTYLIKLVAATLITCLAFRFFV. The short motif at 153–155 is the GDS motif element; the sequence is GDS. The DCXHWCLPGXXDXWN motif motif lies at 404–418; sequence DCLHWCLPGPIDHLN.

It belongs to the PC-esterase family. TBL subfamily.

The protein resides in the membrane. May act as a bridging protein that binds pectin and other cell wall polysaccharides. Probably involved in maintaining esterification of pectins. May be involved in the specific O-acetylation of cell wall polymers. The polypeptide is Protein trichome birefringence-like 23 (TBL23) (Arabidopsis thaliana (Mouse-ear cress)).